A 127-amino-acid chain; its full sequence is Thioredoxin domain-containing protein 8 (127 aa).

In terms of domain architecture, Thioredoxin spans 1-92 (MVQIIKDTNE…SQKVTLFSRI (92 aa)). Cys-32 and Cys-35 are joined by a disulfide.

Belongs to the thioredoxin family. In terms of tissue distribution, testis-specific. Only expressed during spermiogenesis, prominently in the Golgi apparatus of pachytene spermatocytes and round and elongated spermatids, with a transient localization in the developing acrosome of round spermatids (at protein level).

It is found in the cytoplasm. The protein resides in the golgi apparatus. May be required for post-translational modifications of proteins required for acrosomal biogenesis. May act by reducing disulfide bonds within the sperm. The polypeptide is Thioredoxin domain-containing protein 8 (TXNDC8) (Homo sapiens (Human)).